Consider the following 294-residue polypeptide: Thymidylate synthase (294 aa).

Residues Arg-30 and 156–157 (RR) contribute to the dUMP site. Cys-176 (nucleophile) is an active-site residue. Residues 196-199 (RSGD), Asn-207, and 237-239 (HVY) contribute to the dUMP site. A (6R)-5,10-methylene-5,6,7,8-tetrahydrofolate-binding site is contributed by Asp-199. Ala-293 is a (6R)-5,10-methylene-5,6,7,8-tetrahydrofolate binding site.

The protein belongs to the thymidylate synthase family. In terms of assembly, homodimer.

It carries out the reaction dUMP + (6R)-5,10-methylene-5,6,7,8-tetrahydrofolate = 7,8-dihydrofolate + dTMP. It functions in the pathway pyrimidine metabolism; dTTP biosynthesis. In Ascaris suum (Pig roundworm), this protein is Thymidylate synthase.